An 829-amino-acid polypeptide reads, in one-letter code: Periplasmic nitrate reductase (829 aa).

The first 30 residues, 1 to 30 (MNSPRPTPPPFAAAAAGLPILVRASNLVTE), serve as a signal peptide directing secretion. The 57-residue stretch at 36–92 (LVWNKAPCRFCGTGCSVMVATRDGQVVATHGDIKAEVNRGINCVKGYFLSKIMYGSD) folds into the 4Fe-4S Mo/W bis-MGD-type domain. [4Fe-4S] cluster is bound by residues Cys43, Cys46, Cys50, and Cys78. Mo-bis(molybdopterin guanine dinucleotide) is bound by residues Lys80, Gln147, Asn172, Cys176, 209-216 (WGSNMAEM), 240-244 (STFEH), 259-261 (QTD), Met370, Gln374, Asn480, 506-507 (SD), Lys529, Asp556, and 716-725 (TGRVLEHWHT). Phe792 provides a ligand contact to substrate. Residues Asn800 and Lys817 each contribute to the Mo-bis(molybdopterin guanine dinucleotide) site.

The protein belongs to the prokaryotic molybdopterin-containing oxidoreductase family. NasA/NapA/NarB subfamily. Component of the periplasmic nitrate reductase NapAB complex composed of NapA and NapB. [4Fe-4S] cluster serves as cofactor. The cofactor is Mo-bis(molybdopterin guanine dinucleotide).

It localises to the periplasm. The catalysed reaction is 2 Fe(II)-[cytochrome] + nitrate + 2 H(+) = 2 Fe(III)-[cytochrome] + nitrite + H2O. Catalytic subunit of the periplasmic nitrate reductase complex NapAB. Receives electrons from NapB and catalyzes the reduction of nitrate to nitrite. The polypeptide is Periplasmic nitrate reductase (Pseudomonas aeruginosa (strain ATCC 15692 / DSM 22644 / CIP 104116 / JCM 14847 / LMG 12228 / 1C / PRS 101 / PAO1)).